The primary structure comprises 67 residues: Large ribosomal subunit protein uL29 (67 aa).

Belongs to the universal ribosomal protein uL29 family.

This is Large ribosomal subunit protein uL29 from Wolbachia sp. subsp. Drosophila simulans (strain wRi).